The sequence spans 180 residues: ADP-ribosylation factor 4 (180 aa).

Gly2 carries N-myristoyl glycine lipidation. GTP contacts are provided by residues 24 to 31 (GLDAAGKT), 67 to 71 (DVGGQ), and 126 to 129 (NKQD). At Ser147 the chain carries Phosphoserine.

This sequence belongs to the small GTPase superfamily. Arf family. As to quaternary structure, forms a complex containing RAB11A, ASAP1, RAB3IP, RAP11FIP3 and ARF4; the complex promotes preciliary trafficking; the complex binds to RHO in photoreceptor cells and promotes RHO ciliary transport.

The protein resides in the golgi apparatus. It localises to the membrane. Its function is as follows. GTP-binding protein that functions as an allosteric activator of the cholera toxin catalytic subunit, an ADP-ribosyltransferase. Involved in protein trafficking; may modulate vesicle budding and uncoating within the Golgi apparatus. Part of the ciliary targeting complex containing Rab11, ASAP1, Rabin8/RAB3IP, RAB11FIP3 and ARF4, which direct preciliary vesicle trafficking to mother centriole and ciliogenesis initiation. This is ADP-ribosylation factor 4 (ARF4) from Bos taurus (Bovine).